Consider the following 484-residue polypeptide: MIQVLLVTICLAVFPYQGSSIILESGNIDDYEVVYPRKVTALPKGAVQQKYEDTMQYEFKVNEEPVVLHLEKNKGLFSKDYSETHYSPDGREITTYPPVEDHCYYHGRIQNDADSTASISACNGLKGHFKLQGETYFIEPLKLPDSEAHAVFKYENVEKEDEAPKMCGVTETNWESDEPIKKLSQIMIPPEQQRYIELVIVADHRMYTKYDGDKTEISSKIYETANNLNEIYRHLKIHVVLIGLEMWSSGELSKVTLSADETLDSFGEWRERDLLQRKRHDNAQLLTGMIFNEKIEGRAYKESMCDPKRSVGIVRDHRTRPHLVANRMAHELGHNLGFHHDGDSCTCGANSCIMSATVSNEPSSRFSDCSLFQYSSDIIHNPFTSRCLYNEPSKTDIVSPSVCGNYYMEVGEDCDCGPPANCQNPCCDAATCRLTPGSQCADGLCCDQCRFMKKGTICRIARGDDLDDYCNGISAGCPRNPFHA.

The first 20 residues, 1–20 (MIQVLLVTICLAVFPYQGSS), serve as a signal peptide directing secretion. Residues 21 to 191 (IILESGNIDD…KLSQIMIPPE (171 aa)) constitute a propeptide that is removed on maturation. Gln-192 carries the pyrrolidone carboxylic acid modification. In terms of domain architecture, Peptidase M12B spans 194-392 (RYIELVIVAD…FTSRCLYNEP (199 aa)). Ca(2+) contacts are provided by Glu-197 and Asp-281. Intrachain disulfides connect Cys-305–Cys-387, Cys-345–Cys-369, and Cys-347–Cys-352. His-330 is a Zn(2+) binding site. Glu-331 is an active-site residue. Positions 334 and 340 each coordinate Zn(2+). Ca(2+)-binding residues include Cys-387, Asn-390, Val-402, Asn-405, Glu-409, Glu-412, and Asp-415. Residues 400-484 (PSVCGNYYME…AGCPRNPFHA (85 aa)) enclose the Disintegrin domain. 7 disulfides stabilise this stretch: Cys-403/Cys-422, Cys-414/Cys-432, Cys-416/Cys-427, Cys-426/Cys-449, Cys-440/Cys-446, Cys-445/Cys-470, and Cys-458/Cys-477. The short motif at 462-464 (RGD) is the Cell attachment site element.

It belongs to the venom metalloproteinase (M12B) family. P-II subfamily. P-IIb sub-subfamily. As to quaternary structure, monomer. Requires Zn(2+) as cofactor. In terms of processing, the N-terminus is blocked. As to expression, expressed by the venom gland.

It is found in the secreted. With respect to regulation, fibrinogenolytic activity is completely inhibited by EDTA, but not by PMSF. Snake venom zinc metalloproteinase that inhibits ADP-induced human platelet aggregation (IC(50)=120 nM (native) and IC(50)=248 nM (recombinant)). May act by binding to the receptor GPIIb/GPIIIa (ITGA2B/ITGB3) on the platelet surface. Degrades the alpha-chain of fibrinogen completely and the beta-chain partially, leaving the gamma chain intact. Also inhibits the growth of several cell lines, including human liver cancer cells (Bel7402), human leukemia cells (K562) and human gastric carcinoma cells (BGC823). This Protobothrops jerdonii (Jerdon's pitviper) protein is Zinc metalloproteinase-disintegrin jerdonitin.